The sequence spans 298 residues: Nucleotide-binding protein MLBr00563 (298 aa).

21 to 28 (GLSGAGRG) contributes to the ATP binding site. 72–75 (DVRS) contacts GTP.

It belongs to the RapZ-like family.

Functionally, displays ATPase and GTPase activities. The polypeptide is Nucleotide-binding protein MLBr00563 (Mycobacterium leprae (strain Br4923)).